A 213-amino-acid chain; its full sequence is MKCLFLLCLCLVPIVVFSSTFTSQNPINLPSDATPVLDVTGKELDPRLSYRIISIGRGALGGDVYLGKSPNSDAPCANGVFRFNSDVGPSGTPVRFIGSSSHFGPHIFEGELLNIQFDISTVKLCVSYTIWKVGDYDASLGTMLLETGGTIGQADSSWFKIVKSSQLGYNLLYCPFSSDDQFCLKVGVVHQNGKRRLALVKDNPLDVSFKQVQ.

The signal sequence occupies residues Met1–Thr22. Residues Ser23–Asn28 constitute a propeptide that is removed on maturation. Positions Asn25–Pro30 match the Vacuolar targeting signal motif. Disulfide bonds link Cys76-Cys125 and Cys174-Cys183.

Belongs to the protease inhibitor I3 (leguminous Kunitz-type inhibitor) family.

The protein localises to the vacuole. Inhibitor of trypsin (serine protease). Protects the plant by inhibiting proteases of invading organisms. The sequence is that of Serine protease inhibitor 5 from Solanum tuberosum (Potato).